A 289-amino-acid polypeptide reads, in one-letter code: MPQEQYSHHRSTMPSSEGPHIYKVGIYGWRKRCLYFFVLLLMILILVNLAMTIWILKVMNFTIDGMGNLRITEKGLKLEGDSEFLQPLYAKEIKSRPGNALYFKSARNVTVNILNDQTKVLTQLVTGPKAVEAYGKRFEVKTVSGKLLFSADDSEVVVGAERLRVLGAEGTVFPKSIETPNVRADPFKELRLESPTRSLVMEAPKGVEINAEAGNMEAICRSELRLESKDGEIKLDAAKIKLPRLPRGSYTPTGTRQKVFEVCVCANGRLFLSQAGTGSTCQINTSVCL.

Residues 1-37 are Cytoplasmic-facing; that stretch reads MPQEQYSHHRSTMPSSEGPHIYKVGIYGWRKRCLYFF. A helical; Signal-anchor for type II membrane protein membrane pass occupies residues 38–56; that stretch reads VLLLMILILVNLAMTIWIL. Topologically, residues 57–289 are extracellular; the sequence is KVMNFTIDGM…TCQINTSVCL (233 aa). Residues Asn-60 and Asn-108 are each glycosylated (N-linked (GlcNAc...) asparagine). 2 cysteine pairs are disulfide-bonded: Cys-263–Cys-288 and Cys-265–Cys-281. Asn-284 carries N-linked (GlcNAc...) asparagine glycosylation.

Belongs to the sarcoglycan beta/delta/gamma/zeta family. Interacts with FLNC. Cross-link to form 2 major subcomplexes: one consisting of SGCB, SGCD and SGCG and the other consisting of SGCB and SGCD. The association between SGCB and SGCG is particularly strong while SGCA is loosely associated with the other sarcoglycans. Interacts with DAG1. In terms of processing, disulfide bonds are present. Most strongly expressed in skeletal and heart muscle. Also detected in proliferating myoblasts.

The protein resides in the cell membrane. It localises to the sarcolemma. Its subcellular location is the cytoplasm. It is found in the cytoskeleton. Its function is as follows. Component of the sarcoglycan complex, a subcomplex of the dystrophin-glycoprotein complex which forms a link between the F-actin cytoskeleton and the extracellular matrix. This Mus musculus (Mouse) protein is Delta-sarcoglycan (Sgcd).